A 105-amino-acid chain; its full sequence is Nitrogenase-stabilizing/protective protein NifW 2 (105 aa).

The protein belongs to the NifW family.

Its function is as follows. May protect the nitrogenase Fe-Mo protein from oxidative damage. The chain is Nitrogenase-stabilizing/protective protein NifW 2 (nifW2) from Trichormus variabilis (strain ATCC 29413 / PCC 7937) (Anabaena variabilis).